Reading from the N-terminus, the 274-residue chain is UPF0758 protein RHECIAT_CH0001935 (274 aa).

The tract at residues 1–57 (MAKRPAATSSNDELPFATEEPVADERSFFGGRPQNPTAPNARAALPASLSGPEHYHG) is disordered. An MPN domain is found at 152 to 274 (VLSSWSSVIQ…HVSLKGLKLI (123 aa)). Zn(2+) contacts are provided by His-223, His-225, and Asp-236. The JAMM motif signature appears at 223–236 (HNHPSGDPTPSRAD).

This sequence belongs to the UPF0758 family.

The protein is UPF0758 protein RHECIAT_CH0001935 of Rhizobium etli (strain CIAT 652).